The sequence spans 232 residues: Thiamine import ATP-binding protein ThiQ (232 aa).

An ABC transporter domain is found at 2 to 230 (LKLTDITWLY…KASASALLGI (229 aa)). Position 32-39 (32-39 (GPSGAGKS)) interacts with ATP.

It belongs to the ABC transporter superfamily. Thiamine importer (TC 3.A.1.19.1) family. As to quaternary structure, the complex is composed of two ATP-binding proteins (ThiQ), two transmembrane proteins (ThiP) and a solute-binding protein (ThiB).

It localises to the cell inner membrane. The enzyme catalyses thiamine(out) + ATP + H2O = thiamine(in) + ADP + phosphate + H(+). Its function is as follows. Part of the ABC transporter complex ThiBPQ involved in thiamine import. Responsible for energy coupling to the transport system. This Escherichia coli O157:H7 protein is Thiamine import ATP-binding protein ThiQ.